We begin with the raw amino-acid sequence, 652 residues long: Protein phosphatase Slingshot homolog 3 (652 aa).

Over residues 1–16 (MALVTVSRSPPASGHS) the composition is skewed to polar residues. A disordered region spans residues 1–31 (MALVTVSRSPPASGHSTPVGPTDRVIRRRGR). The residue at position 2 (alanine 2) is an N-acetylalanine. Residues serine 9, serine 37, serine 85, and serine 87 each carry the phosphoserine modification. Positions 43-91 (GAVLGLQDGGEGNDAAEADPEPMEKPSGEEQPAEDQTDNGQGSQSPWKQ) are disordered. Positions 80 to 90 (DNGQGSQSPWK) are enriched in polar residues. Residues 266 to 321 (EQMEQAILAELWQVLDASDLDSVTSKEIRQALELRLGCPLQQYRDFIDNQMLLLMA) form the DEK-C domain. Residues 325–466 (RASRIFPHLY…LQTYQGILTA (142 aa)) enclose the Tyrosine-protein phosphatase domain. The active-site Phosphocysteine intermediate is cysteine 410. 3 disordered regions span residues 484–526 (EPLA…LGLR), 540–580 (LLEP…KGGQ), and 610–652 (RAFQ…EGKA). Low complexity predominate over residues 540–552 (LLEPSSEPESTTE). A compositionally biased stretch (basic and acidic residues) spans 642–652 (SVDDSREEGKA).

This sequence belongs to the protein-tyrosine phosphatase family. Does not bind to, or colocalize with, filamentous actin.

The protein localises to the cytoplasm. It is found in the cytoskeleton. It localises to the nucleus. The enzyme catalyses O-phospho-L-tyrosyl-[protein] + H2O = L-tyrosyl-[protein] + phosphate. It catalyses the reaction O-phospho-L-seryl-[protein] + H2O = L-seryl-[protein] + phosphate. It carries out the reaction O-phospho-L-threonyl-[protein] + H2O = L-threonyl-[protein] + phosphate. Functionally, protein phosphatase which may play a role in the regulation of actin filament dynamics. Can dephosphorylate and activate the actin binding/depolymerizing factor cofilin, which subsequently binds to actin filaments and stimulates their disassembly. This chain is Protein phosphatase Slingshot homolog 3 (Ssh3), found in Rattus norvegicus (Rat).